Consider the following 46-residue polypeptide: uncharacterized protein (46 aa).

Its subcellular location is the mitochondrion. This is an uncharacterized protein from Saccharomyces cerevisiae (strain ATCC 204508 / S288c) (Baker's yeast).